Here is a 331-residue protein sequence, read N- to C-terminus: Ketol-acid reductoisomerase (NADP(+)) (331 aa).

One can recognise a KARI N-terminal Rossmann domain in the interval 1–181 (MKMYYDADAD…GGTRAGVIET (181 aa)). Residues 24 to 27 (YGSQ), R47, S50, and 82 to 85 (DEKQ) each bind NADP(+). H107 is an active-site residue. NADP(+) is bound at residue G133. In terms of domain architecture, KARI C-terminal knotted spans 182–327 (TFREETETDL…KKLRAMMPWL (146 aa)). Mg(2+) is bound by residues D190, E194, E226, and E230. S251 is a substrate binding site.

It belongs to the ketol-acid reductoisomerase family. Mg(2+) serves as cofactor.

The catalysed reaction is (2R)-2,3-dihydroxy-3-methylbutanoate + NADP(+) = (2S)-2-acetolactate + NADPH + H(+). The enzyme catalyses (2R,3R)-2,3-dihydroxy-3-methylpentanoate + NADP(+) = (S)-2-ethyl-2-hydroxy-3-oxobutanoate + NADPH + H(+). The protein operates within amino-acid biosynthesis; L-isoleucine biosynthesis; L-isoleucine from 2-oxobutanoate: step 2/4. It participates in amino-acid biosynthesis; L-valine biosynthesis; L-valine from pyruvate: step 2/4. Its function is as follows. Involved in the biosynthesis of branched-chain amino acids (BCAA). Catalyzes an alkyl-migration followed by a ketol-acid reduction of (S)-2-acetolactate (S2AL) to yield (R)-2,3-dihydroxy-isovalerate. In the isomerase reaction, S2AL is rearranged via a Mg-dependent methyl migration to produce 3-hydroxy-3-methyl-2-ketobutyrate (HMKB). In the reductase reaction, this 2-ketoacid undergoes a metal-dependent reduction by NADPH to yield (R)-2,3-dihydroxy-isovalerate. The chain is Ketol-acid reductoisomerase (NADP(+)) from Heliobacterium modesticaldum (strain ATCC 51547 / Ice1).